A 476-amino-acid polypeptide reads, in one-letter code: Angiotensinogen (476 aa).

The N-terminal stretch at 1-24 is a signal peptide; the sequence is MAPAGLSLGATILCLLAWAGLAAG. A disulfide bond links Cys42 and Cys161. A disordered region spans residues 45-64; it reads LEKPSVETPADPTLTPVPIQ. A glycan (N-linked (GlcNAc...) asparagine) is linked at Asn295.

The protein belongs to the serpin family. In terms of processing, in response to low blood pressure, the enzyme renin/REN cleaves angiotensinogen to produce angiotensin-1. Angiotensin-1 is a substrate of ACE (angiotensin converting enzyme) that removes a dipeptide to yield the physiologically active peptide angiotensin-2. Angiotensin-1 and angiotensin-2 can be further processed to generate angiotensin-3, angiotensin-4. Angiotensin 1-9 is cleaved from angiotensin-1 by ACE2 and can be further processed by ACE to produce angiotensin 1-7, angiotensin 1-5 and angiotensin 1-4. Angiotensin 1-7 has also been proposed to be cleaved from angiotensin-2 by ACE2 or from angiotensin-1 by MME (neprilysin). The disulfide bond is labile. Angiotensinogen is present in the circulation in a near 40:60 ratio with the oxidized disulfide-bonded form, which preferentially interacts with receptor-bound renin.

The protein localises to the secreted. Functionally, essential component of the renin-angiotensin system (RAS), a potent regulator of blood pressure, body fluid and electrolyte homeostasis. Its function is as follows. Acts directly on vascular smooth muscle as a potent vasoconstrictor, affects cardiac contractility and heart rate through its action on the sympathetic nervous system, and alters renal sodium and water absorption through its ability to stimulate the zona glomerulosa cells of the adrenal cortex to synthesize and secrete aldosterone. Acts by binding to angiotensin receptors AGTR1 and AGTR2. Also binds the DEAR/FBXW7-AS1 receptor. Stimulates aldosterone release. In terms of biological role, is a ligand for the G-protein coupled receptor MAS1. Has vasodilator and antidiuretic effects. Has an antithrombotic effect that involves MAS1-mediated release of nitric oxide from platelets. This is Angiotensinogen (AGT) from Ovis aries (Sheep).